We begin with the raw amino-acid sequence, 166 residues long: Probable dual specificity protein phosphatase H1 homolog (166 aa).

Positions 25–166 (DITKITDYVY…FLNQIIDKYI (142 aa)) constitute a Tyrosine-protein phosphatase domain. Cys-108 acts as the Phosphocysteine intermediate in catalysis.

Belongs to the protein-tyrosine phosphatase family. Non-receptor class dual specificity subfamily. Homodimer.

It is found in the virion. It localises to the host cytoplasm. The catalysed reaction is O-phospho-L-tyrosyl-[protein] + H2O = L-tyrosyl-[protein] + phosphate. It catalyses the reaction O-phospho-L-seryl-[protein] + H2O = L-seryl-[protein] + phosphate. Functionally, serine/Tyrosine phosphatase which down-regulates cellular antiviral response by dephosphorylating activated STAT1 and blocking interferon (IFN)-stimulated innate immune responses. In Vertebrata (FPV), this protein is Probable dual specificity protein phosphatase H1 homolog.